The sequence spans 189 residues: Bilin-binding protein (189 aa).

The signal sequence occupies residues 1-15 (MQYLIVLALVAAASA). Intrachain disulfides connect C23–C130 and C57–C185.

Belongs to the calycin superfamily. Lipocalin family. Homotetramer. As to expression, hemolymph.

Its subcellular location is the secreted. Functionally, this protein binds the blue pigments bilins. The sequence is that of Bilin-binding protein from Pieris brassicae (White butterfly).